A 156-amino-acid polypeptide reads, in one-letter code: Cell division protein SepF (156 aa).

It belongs to the SepF family. As to quaternary structure, homodimer. Interacts with FtsZ.

The protein resides in the cytoplasm. Its function is as follows. Cell division protein that is part of the divisome complex and is recruited early to the Z-ring. Probably stimulates Z-ring formation, perhaps through the cross-linking of FtsZ protofilaments. Its function overlaps with FtsA. This chain is Cell division protein SepF, found in Ruminiclostridium cellulolyticum (strain ATCC 35319 / DSM 5812 / JCM 6584 / H10) (Clostridium cellulolyticum).